The primary structure comprises 630 residues: Probable potassium transport system protein Kup 2 (630 aa).

The next 12 helical transmembrane spans lie at 17-37 (FWALTLGGVGVVFGDIGTSPL), 56-76 (VIVLGVLSLILWSLFIVVTAK), 108-128 (VFLMSLGVIGASMFIGDSMIT), 145-165 (PALEHYVVPLTVGILVVLFAF), 176-196 (AFGPVMIVWFSTLAVMGLIHI), 214-234 (FMLSHGMVGLVTIGAVFLAVT), 255-275 (WLFFVLPSLLINYFGQGALVL), 293-313 (FLVPLIVLATAATVIASQAVI), 345-365 (IYLPRVNMLLLIGVLMLVLLF), 375-395 (YGIAVSTTMVADGVMGFVVIW), 402-422 (PAAAAALIFPFVAVDAIFFSA), and 427-447 (LLEGAWVPLLFGLLMATLIWV).

This sequence belongs to the HAK/KUP transporter (TC 2.A.72) family.

It localises to the cell inner membrane. It carries out the reaction K(+)(in) + H(+)(in) = K(+)(out) + H(+)(out). Transport of potassium into the cell. Likely operates as a K(+):H(+) symporter. In Rhodopseudomonas palustris (strain BisB18), this protein is Probable potassium transport system protein Kup 2.